Consider the following 269-residue polypeptide: Small ribosomal subunit protein uS2 (269 aa).

The disordered stretch occupies residues 235–269; it reads FDAKNPLKPQNYNTLNKRPYQDSPRKPSYQNQNQR.

It belongs to the universal ribosomal protein uS2 family.

The chain is Small ribosomal subunit protein uS2 from Aster yellows witches'-broom phytoplasma (strain AYWB).